An 86-amino-acid polypeptide reads, in one-letter code: Small ribosomal subunit protein bS20 (86 aa).

Residues 1–27 (MANSKQAKKRAGQSEKRRQHNASRRSM) are disordered.

This sequence belongs to the bacterial ribosomal protein bS20 family.

Its function is as follows. Binds directly to 16S ribosomal RNA. The polypeptide is Small ribosomal subunit protein bS20 (Colwellia psychrerythraea (strain 34H / ATCC BAA-681) (Vibrio psychroerythus)).